The sequence spans 1072 residues: DNA-directed RNA polymerase subunit beta (1072 aa).

It belongs to the RNA polymerase beta chain family. In plastids the minimal PEP RNA polymerase catalytic core is composed of four subunits: alpha, beta, beta', and beta''. When a (nuclear-encoded) sigma factor is associated with the core the holoenzyme is formed, which can initiate transcription.

Its subcellular location is the plastid. The protein localises to the chloroplast. It catalyses the reaction RNA(n) + a ribonucleoside 5'-triphosphate = RNA(n+1) + diphosphate. Its function is as follows. DNA-dependent RNA polymerase catalyzes the transcription of DNA into RNA using the four ribonucleoside triphosphates as substrates. The protein is DNA-directed RNA polymerase subunit beta of Lepidium virginicum (Virginia pepperweed).